A 289-amino-acid polypeptide reads, in one-letter code: RING-H2 finger protein ATL30 (289 aa).

A helical membrane pass occupies residues 26–46 (VIILTVILLVVFFIGFFAIYF). The segment at 114 to 157 (CAICLLEFEEEHILLRLLTTCYHVFHQECIDQWLESNKTCPVCR) adopts an RING-type; atypical zinc-finger fold. The tract at residues 181–206 (HENRDQEQTSTSNEVMLSRQSSGNNE) is disordered. Residues 188–204 (QTSTSNEVMLSRQSSGN) show a composition bias toward polar residues.

The protein belongs to the RING-type zinc finger family. ATL subfamily.

It is found in the membrane. The enzyme catalyses S-ubiquitinyl-[E2 ubiquitin-conjugating enzyme]-L-cysteine + [acceptor protein]-L-lysine = [E2 ubiquitin-conjugating enzyme]-L-cysteine + N(6)-ubiquitinyl-[acceptor protein]-L-lysine.. It functions in the pathway protein modification; protein ubiquitination. This chain is RING-H2 finger protein ATL30 (ATL30), found in Arabidopsis thaliana (Mouse-ear cress).